A 546-amino-acid chain; its full sequence is Chromosomal replication initiator protein DnaA (546 aa).

Residues 1-85 (MSDPQAALRA…TRALSQHMGR (85 aa)) are domain I, interacts with DnaA modulators. Positions 85 to 204 (RPCSLAVTIA…EPAHNPNREK (120 aa)) are domain II. The span at 96-111 (PPQPAPQEEPPAPAPQ) shows a compositional bias: pro residues. Positions 96–209 (PPQPAPQEEP…PNREKSLNPK (114 aa)) are disordered. Residues 126 to 145 (QTQAFQQPTQSTQPAPASQP) are compositionally biased toward low complexity. The span at 191 to 209 (IPREEPAHNPNREKSLNPK) shows a compositional bias: basic and acidic residues. A domain III, AAA+ region region spans residues 205 to 421 (SLNPKHTFEN…GALIRVSAYS (217 aa)). Gly249, Gly251, Lys252, and Thr253 together coordinate ATP. Residues 422–546 (SLVNEPISLE…TQRVKNHNQR (125 aa)) are domain IV, binds dsDNA.

The protein belongs to the DnaA family. As to quaternary structure, oligomerizes as a right-handed, spiral filament on DNA at oriC.

The protein localises to the cytoplasm. Functionally, plays an essential role in the initiation and regulation of chromosomal replication. ATP-DnaA binds to the origin of replication (oriC) to initiate formation of the DNA replication initiation complex once per cell cycle. Binds the DnaA box (a 9 base pair repeat at the origin) and separates the double-stranded (ds)DNA. Forms a right-handed helical filament on oriC DNA; dsDNA binds to the exterior of the filament while single-stranded (ss)DNA is stabiized in the filament's interior. The ATP-DnaA-oriC complex binds and stabilizes one strand of the AT-rich DNA unwinding element (DUE), permitting loading of DNA polymerase. After initiation quickly degrades to an ADP-DnaA complex that is not apt for DNA replication. Binds acidic phospholipids. The polypeptide is Chromosomal replication initiator protein DnaA (Corynebacterium aurimucosum (strain ATCC 700975 / DSM 44827 / CIP 107346 / CN-1) (Corynebacterium nigricans)).